The primary structure comprises 431 residues: uncharacterized protein (431 aa).

This is an uncharacterized protein from Caenorhabditis elegans.